A 73-amino-acid polypeptide reads, in one-letter code: Mauriporin (73 aa).

The signal sequence occupies residues 1–22 (MNKKTLLVIFFITMLIVDEVNS).

This sequence belongs to the non-disulfide-bridged peptide (NDBP) superfamily. Long chain multifunctional peptide (group 2) family. In terms of tissue distribution, expressed by the venom gland.

The protein localises to the secreted. It is found in the target cell membrane. Amphipathic peptide that displays potent antimicrobial activities against a range of Gram-positive and Gram-negative planktonic bacteria with MIC values in the range 5 uM to 10 uM. In more details, it is active on Listeria ivanovii (MIC=5 uM), Staphylococcus epidermidis (MIC=10 uM), Salmonella enterica (MIC=5 uM), Pseudomonas aeruginosa (ATCC 27853) (MIC=5 uM), Acinetobacter baumannii (MIC=5 uM), Klebsiella pneumoniae (MIC=5 uM), Escherichia coli (MIC=7.5 uM), Salmonella typhimurium (MIC=7.5 uM), Pseudomonas aeruginosa (ATCC 9027) (MIC=10 uM). Is also able to prevent P.aeruginosa biofilm formation while showing weak hemolytic activity towards human erythrocytes. Probably induces bacterial cell death through membrane permeabilization. Moreover, shows DNA-binding activities. Also exerts potent selective cytotoxic and antiproliferative activity against three different prostate cancer cell lines (IC(50)=4.4-7.8 uM), compared to non-tumorigenic cell lines (IC(50)=59.7 uM in Vero and 62.5 uM in HUVEC cells). This peptide possibly exerts its cytotoxic activity through a necrotic mode of cell death. Only shows diminished hemolytic activity against sheep erythrocytes. Does not induce cell death through apoptosis and consequently is not acting upon an intracellular target. This chain is Mauriporin, found in Androctonus mauritanicus (Fat-tailed scorpion).